The following is a 72-amino-acid chain: Translation initiation factor IF-1 (72 aa).

An S1-like domain is found at 1–72 (MAKEEVLEFP…TKGRITYRFK (72 aa)).

It belongs to the IF-1 family. Component of the 30S ribosomal translation pre-initiation complex which assembles on the 30S ribosome in the order IF-2 and IF-3, IF-1 and N-formylmethionyl-tRNA(fMet); mRNA recruitment can occur at any time during PIC assembly.

Its subcellular location is the cytoplasm. One of the essential components for the initiation of protein synthesis. Stabilizes the binding of IF-2 and IF-3 on the 30S subunit to which N-formylmethionyl-tRNA(fMet) subsequently binds. Helps modulate mRNA selection, yielding the 30S pre-initiation complex (PIC). Upon addition of the 50S ribosomal subunit IF-1, IF-2 and IF-3 are released leaving the mature 70S translation initiation complex. This Sinorhizobium medicae (strain WSM419) (Ensifer medicae) protein is Translation initiation factor IF-1.